The primary structure comprises 874 residues: Alanine--tRNA ligase (874 aa).

Residues His-563, His-567, Cys-665, and His-669 each contribute to the Zn(2+) site.

The protein belongs to the class-II aminoacyl-tRNA synthetase family. Requires Zn(2+) as cofactor.

The protein localises to the cytoplasm. It catalyses the reaction tRNA(Ala) + L-alanine + ATP = L-alanyl-tRNA(Ala) + AMP + diphosphate. Functionally, catalyzes the attachment of alanine to tRNA(Ala) in a two-step reaction: alanine is first activated by ATP to form Ala-AMP and then transferred to the acceptor end of tRNA(Ala). Also edits incorrectly charged Ser-tRNA(Ala) and Gly-tRNA(Ala) via its editing domain. The chain is Alanine--tRNA ligase from Haemophilus influenzae (strain PittGG).